The following is a 276-amino-acid chain: Pyridinium-3,5-bisthiocarboxylic acid mononucleotide synthase (276 aa).

The active-site Nucleophile and sulfur donor is the C176. 2,3-didehydroalanine (Cys) is present on C176.

It belongs to the LarE family.

The enzyme catalyses pyridinium-3,5-dicarboxylate mononucleotide + [LarE protein]-L-cysteine + ATP = [LarE protein]-dehydroalanine + pyridinium-3-carboxylate-5-thiocarboxylate mononucleotide + AMP + diphosphate + H(+). It carries out the reaction [LarE protein]-L-cysteine + pyridinium-3-carboxylate-5-thiocarboxylate mononucleotide + ATP = pyridinium-3,5-bisthiocarboxylate mononucleotide + [LarE protein]-dehydroalanine + AMP + diphosphate + H(+). In terms of biological role, involved in the biosynthesis of a nickel-pincer cofactor ((SCS)Ni(II) pincer complex). Catalyzes the ATP-dependent incorporation of two sulfur atoms in pyridinium-3,5-biscarboxylic acid mononucleotide (P2CMN) to yield pyridinium-3,5-bisthiocarboxylic acid mononucleotide (P2TMN). The source of sulfur is the enzyme itself: Cys-176 of LarE is the sulfur donor, thereby being converted into dehydroalanine, and is not regenerated in vivo. Thus, two molecules of LarE undergo sacrificial sulfur transfer to create one P2TMN. Binds nickel. Is required for the activation of the lactate racemase LarA. May also be involved in the activation of other nickel-pincer cofactor-dependent enzymes. The protein is Pyridinium-3,5-bisthiocarboxylic acid mononucleotide synthase of Lactiplantibacillus plantarum (strain ATCC BAA-793 / NCIMB 8826 / WCFS1) (Lactobacillus plantarum).